The primary structure comprises 111 residues: Probable monothiol glutaredoxin 2 (111 aa).

Positions 7 to 109 (LKFIQNAIKK…KMLKDETKLI (103 aa)) constitute a Glutaredoxin domain. Glutathione is bound at residue K24. Residue C32 participates in [2Fe-2S] cluster binding. Glutathione-binding positions include R61, F73, and 86 to 87 (CD).

The protein belongs to the glutaredoxin family. Monothiol subfamily.

In Rickettsia typhi (strain ATCC VR-144 / Wilmington), this protein is Probable monothiol glutaredoxin 2 (grxC2).